We begin with the raw amino-acid sequence, 242 residues long: Probable transcriptional regulatory protein LSL_0422 (242 aa).

Positions 1–21 (MSGHSKWHNIQGRKNAQDAKR) are disordered.

The protein belongs to the TACO1 family.

It is found in the cytoplasm. This Ligilactobacillus salivarius (strain UCC118) (Lactobacillus salivarius) protein is Probable transcriptional regulatory protein LSL_0422.